The following is a 1468-amino-acid chain: DNA polymerase III PolC-type (1468 aa).

Residues 197 to 217 (QKSLEDSAPPSEEVTPTQNYD) are disordered. One can recognise an Exonuclease domain in the interval 430–586 (YVVFDVETTG…YDAEATGRLL (157 aa)).

Belongs to the DNA polymerase type-C family. PolC subfamily.

The protein resides in the cytoplasm. It carries out the reaction DNA(n) + a 2'-deoxyribonucleoside 5'-triphosphate = DNA(n+1) + diphosphate. In terms of biological role, required for replicative DNA synthesis. This DNA polymerase also exhibits 3' to 5' exonuclease activity. The sequence is that of DNA polymerase III PolC-type from Streptococcus agalactiae serotype III (strain NEM316).